The chain runs to 477 residues: Aryl-phospho-beta-D-glucosidase BglC (477 aa).

The active-site Proton donor is Glu-170. Residue Glu-378 is the Nucleophile of the active site.

It belongs to the glycosyl hydrolase 1 family.

The enzyme catalyses 6-phospho-beta-D-glucosyl-(1-&gt;4)-D-glucose + H2O = D-glucose 6-phosphate + D-glucose. In terms of biological role, is able to catalyze the hydrolysis of aryl-phospho-beta-D-glucosides such as 4-methylumbelliferyl-phospho-beta-D-glucopyranoside (MUG-P), phosphoarbutin and phosphosalicin. Is not essential for growth on arbutin and salicin as the sole carbon source. In Bacillus subtilis (strain 168), this protein is Aryl-phospho-beta-D-glucosidase BglC (bglC).